We begin with the raw amino-acid sequence, 480 residues long: Cytochrome b-c1 complex subunit 1, mitochondrial (480 aa).

The N-terminal 34 residues, 1–34 (MAASAVCRAACSGTQVLLRTRRSPALLRLPALRG), are a transit peptide targeting the mitochondrion. Lys-111 and Lys-138 each carry N6-acetyllysine. Lys-163 carries the N6-acetyllysine; alternate modification. Lys-163 bears the N6-succinyllysine; alternate mark. Phosphoserine is present on Ser-212. Thr-214 is subject to Phosphothreonine. Residue Lys-248 is modified to N6-acetyllysine.

It belongs to the peptidase M16 family. UQCRC1/QCR1 subfamily. As to quaternary structure, component of the ubiquinol-cytochrome c oxidoreductase (cytochrome b-c1 complex, complex III, CIII), a multisubunit enzyme composed of 11 subunits. The complex is composed of 3 respiratory subunits cytochrome b, cytochrome c1 and Rieske protein UQCRFS1, 2 core protein subunits UQCRC1/QCR1 and UQCRC2/QCR2, and 6 low-molecular weight protein subunits UQCRH/QCR6, UQCRB/QCR7, UQCRQ/QCR8, UQCR10/QCR9, UQCR11/QCR10 and subunit 9, the cleavage product of Rieske protein UQCRFS1. The complex exists as an obligatory dimer and forms supercomplexes (SCs) in the inner mitochondrial membrane with NADH-ubiquinone oxidoreductase (complex I, CI) and cytochrome c oxidase (complex IV, CIV), resulting in different assemblies (supercomplex SCI(1)III(2)IV(1) and megacomplex MCI(2)III(2)IV(2)). Interacts with UQCC6. Interacts with STMP1. Acetylation of Lys-138 is observed in liver mitochondria from fasted mice but not from fed mice. Expressed in neurons and astrocytes of the cerebral cortex and hippocampus (at protein level).

It localises to the mitochondrion inner membrane. Functionally, component of the ubiquinol-cytochrome c oxidoreductase, a multisubunit transmembrane complex that is part of the mitochondrial electron transport chain which drives oxidative phosphorylation. The respiratory chain contains 3 multisubunit complexes succinate dehydrogenase (complex II, CII), ubiquinol-cytochrome c oxidoreductase (cytochrome b-c1 complex, complex III, CIII) and cytochrome c oxidase (complex IV, CIV), that cooperate to transfer electrons derived from NADH and succinate to molecular oxygen, creating an electrochemical gradient over the inner membrane that drives transmembrane transport and the ATP synthase. The cytochrome b-c1 complex catalyzes electron transfer from ubiquinol to cytochrome c, linking this redox reaction to translocation of protons across the mitochondrial inner membrane, with protons being carried across the membrane as hydrogens on the quinol. In the process called Q cycle, 2 protons are consumed from the matrix, 4 protons are released into the intermembrane space and 2 electrons are passed to cytochrome c. The 2 core subunits UQCRC1/QCR1 and UQCRC2/QCR2 are homologous to the 2 mitochondrial-processing peptidase (MPP) subunits beta-MPP and alpha-MPP respectively, and they seem to have preserved their MPP processing properties. May be involved in the in situ processing of UQCRFS1 into the mature Rieske protein and its mitochondrial targeting sequence (MTS)/subunit 9 when incorporated into complex III. Seems to play an important role in the maintenance of proper mitochondrial function in nigral dopaminergic neurons. In Mus musculus (Mouse), this protein is Cytochrome b-c1 complex subunit 1, mitochondrial (Uqcrc1).